Reading from the N-terminus, the 563-residue chain is Arginine--tRNA ligase (563 aa).

Residues Pro-122–His-132 carry the 'HIGH' region motif.

This sequence belongs to the class-I aminoacyl-tRNA synthetase family. Monomer.

It localises to the cytoplasm. It catalyses the reaction tRNA(Arg) + L-arginine + ATP = L-arginyl-tRNA(Arg) + AMP + diphosphate. This chain is Arginine--tRNA ligase, found in Latilactobacillus sakei subsp. sakei (strain 23K) (Lactobacillus sakei subsp. sakei).